Consider the following 126-residue polypeptide: Methylglyoxal synthase (126 aa).

The MGS-like domain occupies 1-126 (MEKKIALIAH…LIKGFEGLNT (126 aa)). Substrate-binding positions include His10, Lys14, 36–39 (TGTT), and 56–57 (SG). Asp62 serves as the catalytic Proton donor/acceptor. Residue His89 participates in substrate binding.

This sequence belongs to the methylglyoxal synthase family.

It catalyses the reaction dihydroxyacetone phosphate = methylglyoxal + phosphate. Catalyzes the formation of methylglyoxal from dihydroxyacetone phosphate. The chain is Methylglyoxal synthase from Borrelia garinii subsp. bavariensis (strain ATCC BAA-2496 / DSM 23469 / PBi) (Borreliella bavariensis).